The sequence spans 279 residues: MDLATKYFNQINWRYVDHSSGLEPMQSFAFDDTFSESVGKDLSCNVVRTWIHQHTVILGIHDSRLPFLSDGIRFLTDEQGYNAIVRNSGGLGVVLDQGILNISLIFKGQTETTIDEAFTVMYLLISKMFEDEDVSIDTKEIEQSYCPGKFDLSINDKKFAGISQRRVRGGIAVQIYLCIEGSGSERALMMQQFYQRALKGQTTKFHYPDIDPSCMASLETLLNREIKVQDVMFLLLYALKDLGANLNMDPITEDEWTRYEGYYDKMLERNAKINEKLDF.

Residues 41–247 form the BPL/LPL catalytic domain; it reads DLSCNVVRTW…ALKDLGANLN (207 aa). Cys-146 serves as the catalytic Acyl-thioester intermediate.

Belongs to the octanoyltransferase LipL family.

It carries out the reaction N(6)-octanoyl-L-lysyl-[glycine-cleavage complex H protein] + L-lysyl-[lipoyl-carrier protein] = N(6)-octanoyl-L-lysyl-[lipoyl-carrier protein] + L-lysyl-[glycine-cleavage complex H protein]. The protein operates within protein modification; protein lipoylation via endogenous pathway; protein N(6)-(lipoyl)lysine from octanoyl-[acyl-carrier-protein]. In terms of biological role, catalyzes the amidotransfer (transamidation) of the octanoyl moiety from octanoyl-GcvH to the lipoyl domain of the E2 subunit of lipoate-dependent enzymes. This chain is Octanoyl-[GcvH]:protein N-octanoyltransferase, found in Staphylococcus epidermidis (strain ATCC 35984 / DSM 28319 / BCRC 17069 / CCUG 31568 / BM 3577 / RP62A).